The sequence spans 235 residues: Ribonuclease 3 (235 aa).

Residues 7 to 134 (LKDLQNKIEI…LIASIYLDKG (128 aa)) form the RNase III domain. Position 47 (Glu-47) interacts with Mg(2+). Residue Asp-51 is part of the active site. Mg(2+) contacts are provided by Asp-120 and Glu-123. Glu-123 is a catalytic residue. The region spanning 161–230 (DYKTKLQEII…AKKAIENMEV (70 aa)) is the DRBM domain.

This sequence belongs to the ribonuclease III family. As to quaternary structure, homodimer. The cofactor is Mg(2+).

The protein resides in the cytoplasm. The enzyme catalyses Endonucleolytic cleavage to 5'-phosphomonoester.. In terms of biological role, digests double-stranded RNA. Involved in the processing of primary rRNA transcript to yield the immediate precursors to the large and small rRNAs (23S and 16S). Processes some mRNAs, and tRNAs when they are encoded in the rRNA operon. Processes pre-crRNA and tracrRNA of type II CRISPR loci if present in the organism. The polypeptide is Ribonuclease 3 (Clostridium tetani (strain Massachusetts / E88)).